Reading from the N-terminus, the 316-residue chain is tRNA dimethylallyltransferase (316 aa).

17 to 24 serves as a coordination point for ATP; that stretch reads GPTASGKT. Residue 19–24 participates in substrate binding; it reads TASGKT. Interaction with substrate tRNA regions lie at residues 42-45, 166-170, 247-252, and 280-287; these read DSAL, QRLSR, RCVGYR, and KRQITWLR.

The protein belongs to the IPP transferase family. Monomer. It depends on Mg(2+) as a cofactor.

It catalyses the reaction adenosine(37) in tRNA + dimethylallyl diphosphate = N(6)-dimethylallyladenosine(37) in tRNA + diphosphate. Functionally, catalyzes the transfer of a dimethylallyl group onto the adenine at position 37 in tRNAs that read codons beginning with uridine, leading to the formation of N6-(dimethylallyl)adenosine (i(6)A). This chain is tRNA dimethylallyltransferase, found in Escherichia coli O127:H6 (strain E2348/69 / EPEC).